The following is a 359-amino-acid chain: 3-dehydroquinate synthase (359 aa).

Belongs to the archaeal-type DHQ synthase family.

The catalysed reaction is 2-amino-2,3,7-trideoxy-D-lyxo-hept-6-ulosonate + NAD(+) + H2O = 3-dehydroquinate + NH4(+) + NADH + H(+). Functionally, catalyzes the oxidative deamination and cyclization of 2-amino-3,7-dideoxy-D-threo-hept-6-ulosonic acid (ADH) to yield 3-dehydroquinate (DHQ), which is fed into the canonical shikimic pathway of aromatic amino acid biosynthesis. The polypeptide is 3-dehydroquinate synthase (Methanosphaera stadtmanae (strain ATCC 43021 / DSM 3091 / JCM 11832 / MCB-3)).